The following is a 170-amino-acid chain: Alpha-crystallin A chain (170 aa).

N-acetylmethionine is present on Met1. Residues 1 to 63 form a required for complex formation with BFSP1 and BFSP2 region; it reads MDVTIQHPWF…RTVLDSGISE (63 aa). Gln6 carries the post-translational modification Deamidated glutamine; partial. Position 45 is a phosphoserine (Ser45). Position 50 is a deamidated glutamine; partial (Gln50). The sHSP domain occupies 52-161; sequence LFRTVLDSGI…SERTIPVSRE (110 aa). Lys70 and Lys99 each carry N6-acetyllysine. His100 contacts Zn(2+). At Asn101 the chain carries Deamidated asparagine; partial. Residues Glu102, His107, and His151 each coordinate Zn(2+). The segment at 144 to 170 is disordered; sequence PKIVDPSHSERTIPVSREEKPSSAPSS. The span at 148 to 164 shows a compositional bias: basic and acidic residues; the sequence is DPSHSERTIPVSREEKP. Residue Ser159 is glycosylated (O-linked (GlcNAc) serine).

The protein belongs to the small heat shock protein (HSP20) family. Heteromer composed of three CRYAA and one CRYAB subunits. Inter-subunit bridging via zinc ions enhances stability, which is crucial as there is no protein turn over in the lens. Can also form homodimers and homotetramers (dimers of dimers) which serve as the building blocks of homooligomers. Within homooligomers, the zinc-binding motif is created from residues of 3 different molecules. His-100 and Glu-102 from one molecule are ligands of the zinc ion, and His-107 and His-151 residues from additional molecules complete the site with tetrahedral coordination geometry. Part of a complex required for lens intermediate filament formation composed of BFSP1, BFSP2 and CRYAA. Post-translationally, acetylation at Lys-70 may increase chaperone activity. Undergoes age-dependent proteolytical cleavage at the C-terminus.

The protein resides in the cytoplasm. It is found in the nucleus. Contributes to the transparency and refractive index of the lens. Acts as a chaperone, preventing aggregation of various proteins under a wide range of stress conditions. Required for the correct formation of lens intermediate filaments as part of a complex composed of BFSP1, BFSP2 and CRYAA. The chain is Alpha-crystallin A chain (CRYAA) from Choloepus hoffmanni (Hoffmann's two-fingered sloth).